Here is a 490-residue protein sequence, read N- to C-terminus: Bifunctional protein HldE (490 aa).

The ribokinase stretch occupies residues 1-330 (MNNFDTLLQS…RKILPHASLA (330 aa)). Residue 205 to 208 (NRKE) participates in ATP binding. Residue Asp-275 is part of the active site. Residues 358–490 (FTNGCFDILH…LVEKAREGTS (133 aa)) are cytidylyltransferase.

In the N-terminal section; belongs to the carbohydrate kinase PfkB family. The protein in the C-terminal section; belongs to the cytidylyltransferase family. As to quaternary structure, homodimer.

It carries out the reaction D-glycero-beta-D-manno-heptose 7-phosphate + ATP = D-glycero-beta-D-manno-heptose 1,7-bisphosphate + ADP + H(+). It catalyses the reaction D-glycero-beta-D-manno-heptose 1-phosphate + ATP + H(+) = ADP-D-glycero-beta-D-manno-heptose + diphosphate. The protein operates within nucleotide-sugar biosynthesis; ADP-L-glycero-beta-D-manno-heptose biosynthesis; ADP-L-glycero-beta-D-manno-heptose from D-glycero-beta-D-manno-heptose 7-phosphate: step 1/4. Its pathway is nucleotide-sugar biosynthesis; ADP-L-glycero-beta-D-manno-heptose biosynthesis; ADP-L-glycero-beta-D-manno-heptose from D-glycero-beta-D-manno-heptose 7-phosphate: step 3/4. Functionally, catalyzes the phosphorylation of D-glycero-D-manno-heptose 7-phosphate at the C-1 position to selectively form D-glycero-beta-D-manno-heptose-1,7-bisphosphate. Catalyzes the ADP transfer from ATP to D-glycero-beta-D-manno-heptose 1-phosphate, yielding ADP-D-glycero-beta-D-manno-heptose. The chain is Bifunctional protein HldE from Rhodopseudomonas palustris (strain HaA2).